The primary structure comprises 70 residues: DNA gyrase inhibitor YacG (70 aa).

Residues C7, C10, C26, and C30 each contribute to the Zn(2+) site.

Belongs to the DNA gyrase inhibitor YacG family. As to quaternary structure, interacts with GyrB. Requires Zn(2+) as cofactor.

Functionally, inhibits all the catalytic activities of DNA gyrase by preventing its interaction with DNA. Acts by binding directly to the C-terminal domain of GyrB, which probably disrupts DNA binding by the gyrase. The sequence is that of DNA gyrase inhibitor YacG from Shewanella sediminis (strain HAW-EB3).